Here is a 126-residue protein sequence, read N- to C-terminus: Prefoldin subunit beta (126 aa).

The protein belongs to the prefoldin subunit beta family. As to quaternary structure, heterohexamer of two alpha and four beta subunits.

Its subcellular location is the cytoplasm. Molecular chaperone capable of stabilizing a range of proteins. Seems to fulfill an ATP-independent, HSP70-like function in archaeal de novo protein folding. The polypeptide is Prefoldin subunit beta (Pyrobaculum neutrophilum (strain DSM 2338 / JCM 9278 / NBRC 100436 / V24Sta) (Thermoproteus neutrophilus)).